The sequence spans 169 residues: Cilia- and flagella-associated protein HOATZ (169 aa).

3 disordered regions span residues 1-21 (METG…MCPP), 52-89 (SQLV…LASN), and 144-169 (KAKE…KTLD). The span at 75-89 (SENSHSSQSFHLASN) shows a compositional bias: polar residues.

Belongs to the HOATZ family.

The protein resides in the cytoplasm. The protein localises to the cell projection. It localises to the cilium. In terms of biological role, required for motile ciliogenesis and flagellar genesis by mediating the maturation of the glycolytic enzyme ENO4. The chain is Cilia- and flagella-associated protein HOATZ from Homo sapiens (Human).